The following is a 485-amino-acid chain: Glutamyl-tRNA(Gln) amidotransferase subunit A (485 aa).

Active-site charge relay system residues include Lys-79 and Ser-154. Ser-178 acts as the Acyl-ester intermediate in catalysis.

This sequence belongs to the amidase family. GatA subfamily. Heterotrimer of A, B and C subunits.

It catalyses the reaction L-glutamyl-tRNA(Gln) + L-glutamine + ATP + H2O = L-glutaminyl-tRNA(Gln) + L-glutamate + ADP + phosphate + H(+). Its function is as follows. Allows the formation of correctly charged Gln-tRNA(Gln) through the transamidation of misacylated Glu-tRNA(Gln) in organisms which lack glutaminyl-tRNA synthetase. The reaction takes place in the presence of glutamine and ATP through an activated gamma-phospho-Glu-tRNA(Gln). The sequence is that of Glutamyl-tRNA(Gln) amidotransferase subunit A from Carboxydothermus hydrogenoformans (strain ATCC BAA-161 / DSM 6008 / Z-2901).